A 62-amino-acid chain; its full sequence is Large ribosomal subunit protein eL24 (62 aa).

The Zn(2+) site is built by C6, C9, C32, and C36. The C4-type zinc-finger motif lies at 6–36 (CYFCGQMLEPGTGKLYIKKDGSTYFMCSSKC).

Belongs to the eukaryotic ribosomal protein eL24 family. As to quaternary structure, part of the 50S ribosomal subunit. Forms a cluster with proteins L3 and L14. The cofactor is Zn(2+).

Functionally, binds to the 23S rRNA. The polypeptide is Large ribosomal subunit protein eL24 (Methanosarcina mazei (strain ATCC BAA-159 / DSM 3647 / Goe1 / Go1 / JCM 11833 / OCM 88) (Methanosarcina frisia)).